Consider the following 220-residue polypeptide: Deoxyribose-phosphate aldolase (220 aa).

Asp-89 functions as the Proton donor/acceptor in the catalytic mechanism. The active-site Schiff-base intermediate with acetaldehyde is Lys-150. Lys-182 serves as the catalytic Proton donor/acceptor.

Belongs to the DeoC/FbaB aldolase family. DeoC type 1 subfamily.

Its subcellular location is the cytoplasm. The catalysed reaction is 2-deoxy-D-ribose 5-phosphate = D-glyceraldehyde 3-phosphate + acetaldehyde. It participates in carbohydrate degradation; 2-deoxy-D-ribose 1-phosphate degradation; D-glyceraldehyde 3-phosphate and acetaldehyde from 2-deoxy-alpha-D-ribose 1-phosphate: step 2/2. Its function is as follows. Catalyzes a reversible aldol reaction between acetaldehyde and D-glyceraldehyde 3-phosphate to generate 2-deoxy-D-ribose 5-phosphate. This chain is Deoxyribose-phosphate aldolase, found in Mycoplasmoides pirum (Mycoplasma pirum).